A 238-amino-acid polypeptide reads, in one-letter code: 1-(5-phosphoribosyl)-5-[(5-phosphoribosylamino)methylideneamino] imidazole-4-carboxamide isomerase (238 aa).

The active-site Proton acceptor is the Asp-8. The Proton donor role is filled by Asp-129.

The protein belongs to the HisA/HisF family.

The protein resides in the cytoplasm. The enzyme catalyses 1-(5-phospho-beta-D-ribosyl)-5-[(5-phospho-beta-D-ribosylamino)methylideneamino]imidazole-4-carboxamide = 5-[(5-phospho-1-deoxy-D-ribulos-1-ylimino)methylamino]-1-(5-phospho-beta-D-ribosyl)imidazole-4-carboxamide. It participates in amino-acid biosynthesis; L-histidine biosynthesis; L-histidine from 5-phospho-alpha-D-ribose 1-diphosphate: step 4/9. The sequence is that of 1-(5-phosphoribosyl)-5-[(5-phosphoribosylamino)methylideneamino] imidazole-4-carboxamide isomerase from Anaeromyxobacter dehalogenans (strain 2CP-C).